Consider the following 580-residue polypeptide: Arginine--tRNA ligase (580 aa).

Positions 123–133 (PNLAKEMHVGH) match the 'HIGH' region motif.

Belongs to the class-I aminoacyl-tRNA synthetase family. Monomer.

The protein localises to the cytoplasm. It carries out the reaction tRNA(Arg) + L-arginine + ATP = L-arginyl-tRNA(Arg) + AMP + diphosphate. This Pseudoalteromonas translucida (strain TAC 125) protein is Arginine--tRNA ligase.